A 95-amino-acid polypeptide reads, in one-letter code: Small ribosomal subunit protein uS19 (95 aa).

This sequence belongs to the universal ribosomal protein uS19 family.

Its function is as follows. Protein S19 forms a complex with S13 that binds strongly to the 16S ribosomal RNA. This chain is Small ribosomal subunit protein uS19 (rpsS), found in Treponema pallidum (strain Nichols).